A 428-amino-acid chain; its full sequence is Kynureninase (428 aa).

Residues Thr-104, Thr-105, 132-135 (FPSD), Asp-213, His-216, and Tyr-238 each bind pyridoxal 5'-phosphate. Position 239 is an N6-(pyridoxal phosphate)lysine (Lys-239). Pyridoxal 5'-phosphate-binding residues include Trp-267 and Thr-295.

The protein belongs to the kynureninase family. Homodimer. Requires pyridoxal 5'-phosphate as cofactor.

The enzyme catalyses L-kynurenine + H2O = anthranilate + L-alanine + H(+). It catalyses the reaction 3-hydroxy-L-kynurenine + H2O = 3-hydroxyanthranilate + L-alanine + H(+). The protein operates within amino-acid degradation; L-kynurenine degradation; L-alanine and anthranilate from L-kynurenine: step 1/1. It functions in the pathway cofactor biosynthesis; NAD(+) biosynthesis; quinolinate from L-kynurenine: step 2/3. Functionally, catalyzes the cleavage of L-kynurenine (L-Kyn) and L-3-hydroxykynurenine (L-3OHKyn) into anthranilic acid (AA) and 3-hydroxyanthranilic acid (3-OHAA), respectively. The polypeptide is Kynureninase (Bacillus cereus (strain ATCC 10987 / NRS 248)).